We begin with the raw amino-acid sequence, 97 residues long: Co-chaperonin GroES (97 aa).

It belongs to the GroES chaperonin family. Heptamer of 7 subunits arranged in a ring. Interacts with the chaperonin GroEL.

The protein resides in the cytoplasm. In terms of biological role, together with the chaperonin GroEL, plays an essential role in assisting protein folding. The GroEL-GroES system forms a nano-cage that allows encapsulation of the non-native substrate proteins and provides a physical environment optimized to promote and accelerate protein folding. GroES binds to the apical surface of the GroEL ring, thereby capping the opening of the GroEL channel. This Pseudarthrobacter chlorophenolicus (strain ATCC 700700 / DSM 12829 / CIP 107037 / JCM 12360 / KCTC 9906 / NCIMB 13794 / A6) (Arthrobacter chlorophenolicus) protein is Co-chaperonin GroES.